The chain runs to 448 residues: ATP synthase subunit b-delta (448 aa).

The segment at 1 to 168 (MSTFIGQLIG…GSVGAAKRPV (168 aa)) is ATP synthase subunit b. A helical membrane pass occupies residues 4-24 (FIGQLIGFAVIVFLVVKYVVP). Positions 169 to 448 (PGGYSGMHAA…LSAAALHLPN (280 aa)) are ATP synthase subunit delta.

It in the N-terminal section; belongs to the ATPase B chain family. In the C-terminal section; belongs to the ATPase delta chain family. As to quaternary structure, F-type ATPases have 2 components, F(1) - the catalytic core - and F(0) - the membrane proton channel. F(1) has five subunits: alpha(3), beta(3), gamma(1), delta(1), epsilon(1). F(0) has three main subunits: a(1), b(2) and c(10-14). The alpha and beta chains form an alternating ring which encloses part of the gamma chain. F(1) is attached to F(0) by a central stalk formed by the gamma and epsilon chains, while a peripheral stalk is formed by the delta and b chains.

The protein localises to the cell membrane. In terms of biological role, f(1)F(0) ATP synthase produces ATP from ADP in the presence of a proton or sodium gradient. F-type ATPases consist of two structural domains, F(1) containing the extramembraneous catalytic core and F(0) containing the membrane proton channel, linked together by a central stalk and a peripheral stalk. During catalysis, ATP synthesis in the catalytic domain of F(1) is coupled via a rotary mechanism of the central stalk subunits to proton translocation. Its function is as follows. This fusion protein includes a component of the F(0) channel (subunit b) and of the F(1) subunit (subunit delta). Two copies of subunit b and one of delta together form the peripheral 'stator' stalk which links F(1) to F(0). This Mycobacteroides abscessus (strain ATCC 19977 / DSM 44196 / CCUG 20993 / CIP 104536 / JCM 13569 / NCTC 13031 / TMC 1543 / L948) (Mycobacterium abscessus) protein is ATP synthase subunit b-delta (atpFH).